A 219-amino-acid chain; its full sequence is Protein-L-isoaspartate O-methyltransferase 2 (219 aa).

The active site involves serine 66.

Belongs to the methyltransferase superfamily. L-isoaspartyl/D-aspartyl protein methyltransferase family.

It is found in the cytoplasm. It catalyses the reaction [protein]-L-isoaspartate + S-adenosyl-L-methionine = [protein]-L-isoaspartate alpha-methyl ester + S-adenosyl-L-homocysteine. Functionally, catalyzes the methyl esterification of L-isoaspartyl residues in peptides and proteins that result from spontaneous decomposition of normal L-aspartyl and L-asparaginyl residues. It plays a role in the repair and/or degradation of damaged proteins. This Marinobacter nauticus (strain ATCC 700491 / DSM 11845 / VT8) (Marinobacter aquaeolei) protein is Protein-L-isoaspartate O-methyltransferase 2.